The chain runs to 487 residues: MDANGGPVQIRTQNYVKLGYHYLITHFFKLMFLPLMAVLFMNVSLLSLNHLQLYYNSTGFIFVITLAIVGSIVFFMSRPRSIYLLDYSCYLPPSSQKVSYQKFMNNSSLIQDFSETSLEFQRKILIRSGLGEETYLPDSIHSIPPRPTMAAAREEAEQVIFGALDNLFENTKINPREIGVLVVNCSLFNPTPSLSAMIVNKYKLRGNIKSFNLGGMGCSAGVIAVDLASDMLQIHRNTFALVVSTENITQNWYFGNKKAMLIPNCLFRVGGSAVLLSNKPLDRKRSKYKLVHTVRTHKGSDENAFNCVYQEQDECLKTGVSLSKDLMAIAGEALKTNITSLGPLVLPISEQILFFATFVAKRLFNDKKKKPYIPDFKLALDHFCIHAGGRAVIDELEKSLKLSPKHVEASRMTLHRFGNTSSSSIWYELAYTEAKGRMRKGNRVWQIAFGSGFKCNSAVWVALRNVEPSVNNPWEHCIHRYPVKIDL.

The next 2 membrane-spanning stretches (helical) occupy residues 23 to 43 and 57 to 77; these read LITH…FMNV and STGF…FFMS. Residues 74-363 enclose the FAE domain; it reads FFMSRPRSIY…FFATFVAKRL (290 aa). Catalysis depends on residues Cys218, His297, His382, His386, His415, and Asn419.

Belongs to the thiolase-like superfamily. Chalcone/stilbene synthases family. In terms of tissue distribution, expressed in flowers.

It is found in the membrane. It catalyses the reaction a very-long-chain acyl-CoA + malonyl-CoA + H(+) = a very-long-chain 3-oxoacyl-CoA + CO2 + CoA. It functions in the pathway lipid metabolism; fatty acid biosynthesis. Inhibited by K3 herbicides such as alachlor, allidochlor, anilofos, cafenstrole, fentrazamide and flufenacet. Strongly inhibited by metazachlor. Active on saturated acyl-CoAs up to C22. Mediates the synthesis of VLCFAs from 20 to 26 carbons in length (e.g. C20:1, C20, C24, C26). The protein is 3-ketoacyl-CoA synthase 17 of Arabidopsis thaliana (Mouse-ear cress).